The sequence spans 366 residues: NADH-quinone oxidoreductase subunit D (366 aa).

This sequence belongs to the complex I 49 kDa subunit family. In terms of assembly, NDH-1 is composed of 14 different subunits. Subunits NuoB, C, D, E, F, and G constitute the peripheral sector of the complex.

It localises to the cell membrane. It catalyses the reaction a quinone + NADH + 5 H(+)(in) = a quinol + NAD(+) + 4 H(+)(out). In terms of biological role, NDH-1 shuttles electrons from NADH, via FMN and iron-sulfur (Fe-S) centers, to quinones in the respiratory chain. The immediate electron acceptor for the enzyme in this species is believed to be a menaquinone. Couples the redox reaction to proton translocation (for every two electrons transferred, four hydrogen ions are translocated across the cytoplasmic membrane), and thus conserves the redox energy in a proton gradient. This chain is NADH-quinone oxidoreductase subunit D, found in Bacillus thuringiensis subsp. konkukian (strain 97-27).